The sequence spans 450 residues: C4-dicarboxylate transport protein (450 aa).

Helical transmembrane passes span 25–45 (VVFA…YGAA), 56–76 (LIKM…IASM), 90–110 (MAYF…VANV), 162–182 (ILQV…VGDA), 200–220 (LVNI…AFTI), 234–254 (LVLT…GAVA), 319–339 (IYMT…LTLG), and 367–387 (AATL…ILGV).

This sequence belongs to the dicarboxylate/amino acid:cation symporter (DAACS) (TC 2.A.23) family.

It localises to the cell inner membrane. Responsible for the transport of dicarboxylates such as succinate, fumarate, and malate from the periplasm across the membrane. The protein is C4-dicarboxylate transport protein of Acidovorax sp. (strain JS42).